Consider the following 379-residue polypeptide: MKILRKNHPLLKIVNHSFIDLPTPSNISSWWNFGSLLGMCLVIQILTGLFLAMHYTSDTATAFSSVAHICRDVNYGWLIRYLHANGASMFFICLFIHVGRGIYYGSYVLSETWNIGIILLLTTMATAFVGYVLPWGQMSFWGATVITNLLSAIPYIGSTLVEWIWGGFSVDKATLTRFFAFHFILPFIIAAFALVHLLFLHETGSNNPSGLNSDSDKIPFHPYYTIKDLLGIFLLLLVLMTLALFFPDVLGDPDNFTPANPLNTPAHIKPEWYFLFAYAILRSIPNKLGGVLALVLSILILAAFPLLNTSKQHGLIFRPVTQTIYWIFIANLLVLTWIGGQPVEYPFTTIGQIASITYFTIIIILIPVSNTIENNIIKL.

The next 4 membrane-spanning stretches (helical) occupy residues 33–53, 77–98, 113–133, and 178–198; these read FGSL…FLAM, WLIR…FIHV, WNIG…GYVL, and FFAF…VHLL. The heme b site is built by H83 and H97. Residues H182 and H196 each contribute to the heme b site. H201 lines the a ubiquinone pocket. 4 consecutive transmembrane segments (helical) span residues 226–246, 288–308, 320–340, and 347–367; these read IKDL…ALFF, LGGV…PLLN, VTQT…WIGG, and FTTI…ILIP.

Belongs to the cytochrome b family. The cytochrome bc1 complex contains 11 subunits: 3 respiratory subunits (MT-CYB, CYC1 and UQCRFS1), 2 core proteins (UQCRC1 and UQCRC2) and 6 low-molecular weight proteins (UQCRH/QCR6, UQCRB/QCR7, UQCRQ/QCR8, UQCR10/QCR9, UQCR11/QCR10 and a cleavage product of UQCRFS1). This cytochrome bc1 complex then forms a dimer. Heme b is required as a cofactor.

Its subcellular location is the mitochondrion inner membrane. In terms of biological role, component of the ubiquinol-cytochrome c reductase complex (complex III or cytochrome b-c1 complex) that is part of the mitochondrial respiratory chain. The b-c1 complex mediates electron transfer from ubiquinol to cytochrome c. Contributes to the generation of a proton gradient across the mitochondrial membrane that is then used for ATP synthesis. The polypeptide is Cytochrome b (MT-CYB) (Akodon lindberghi (Lindbergh's grass mouse)).